A 426-amino-acid chain; its full sequence is Enolase 2 (426 aa).

Gln-163 contacts (2R)-2-phosphoglycerate. Residue Glu-205 is the Proton donor of the active site. Mg(2+) is bound by residues Asp-242, Glu-285, and Asp-312. (2R)-2-phosphoglycerate is bound by residues Lys-337, Arg-366, Ser-367, and Lys-388. Lys-337 functions as the Proton acceptor in the catalytic mechanism.

This sequence belongs to the enolase family. The cofactor is Mg(2+).

It localises to the cytoplasm. It is found in the secreted. Its subcellular location is the cell surface. It catalyses the reaction (2R)-2-phosphoglycerate = phosphoenolpyruvate + H2O. It participates in carbohydrate degradation; glycolysis; pyruvate from D-glyceraldehyde 3-phosphate: step 4/5. Its function is as follows. Catalyzes the reversible conversion of 2-phosphoglycerate (2-PG) into phosphoenolpyruvate (PEP). It is essential for the degradation of carbohydrates via glycolysis. The protein is Enolase 2 of Methanospirillum hungatei JF-1 (strain ATCC 27890 / DSM 864 / NBRC 100397 / JF-1).